Reading from the N-terminus, the 226-residue chain is Glyceraldehyde 3-phosphate phosphatase (226 aa).

Belongs to the HAD-like hydrolase superfamily. The cofactor is Mg(2+).

Functionally, catalyzes the dephosphorylation of D,L-glyceraldehyde 3-phosphate in vitro. The protein is Glyceraldehyde 3-phosphate phosphatase of Methanothermobacter thermautotrophicus (strain ATCC 29096 / DSM 1053 / JCM 10044 / NBRC 100330 / Delta H) (Methanobacterium thermoautotrophicum).